Reading from the N-terminus, the 503-residue chain is ATP synthase subunit beta (503 aa).

ATP is bound at residue 157–164; the sequence is GGAGVGKT.

This sequence belongs to the ATPase alpha/beta chains family. F-type ATPases have 2 components, CF(1) - the catalytic core - and CF(0) - the membrane proton channel. CF(1) has five subunits: alpha(3), beta(3), gamma(1), delta(1), epsilon(1). CF(0) has three main subunits: a(1), b(2) and c(9-12). The alpha and beta chains form an alternating ring which encloses part of the gamma chain. CF(1) is attached to CF(0) by a central stalk formed by the gamma and epsilon chains, while a peripheral stalk is formed by the delta and b chains.

It localises to the cell membrane. The enzyme catalyses ATP + H2O + 4 H(+)(in) = ADP + phosphate + 5 H(+)(out). Produces ATP from ADP in the presence of a proton gradient across the membrane. The catalytic sites are hosted primarily by the beta subunits. The polypeptide is ATP synthase subunit beta (Christiangramia forsetii (strain DSM 17595 / CGMCC 1.15422 / KT0803) (Gramella forsetii)).